The sequence spans 258 residues: NAD kinase (258 aa).

Asp-45 (proton acceptor) is an active-site residue. Residues 45 to 46 (DG), 117 to 118 (NE), Asp-147, Ala-155, 158 to 163 (TAYNYS), and Ala-182 each bind NAD(+).

The protein belongs to the NAD kinase family. It depends on a divalent metal cation as a cofactor.

The protein localises to the cytoplasm. It catalyses the reaction NAD(+) + ATP = ADP + NADP(+) + H(+). In terms of biological role, involved in the regulation of the intracellular balance of NAD and NADP, and is a key enzyme in the biosynthesis of NADP. Catalyzes specifically the phosphorylation on 2'-hydroxyl of the adenosine moiety of NAD to yield NADP. This Xanthomonas oryzae pv. oryzae (strain MAFF 311018) protein is NAD kinase.